The sequence spans 328 residues: Homeobox protein DLX-2 (328 aa).

Composition is skewed to polar residues over residues 16 to 28 and 52 to 72; these read QIAASSTYHQHQQ and ESPTLPVSTATDSSYYTNQQH. Disordered stretches follow at residues 16–81, 211–270, and 300–328; these read QIAA…GGGG, WKSG…SSPS, and LHPTQTPQPHHHHHHHGGGGAPVSAGTIF. The segment at residues 152-211 is a DNA-binding region (homeobox); it reads VRKPRTIYSSFQLAALQRRFQKTQYLALPERAELAASLGLTQTQVKIWFQNRRSKFKKMW. At Ser-232 the chain carries Phosphoserine. Residues 250–264 are compositionally biased toward gly residues; that stretch reads AGGGGPGSGGSGAGS.

This sequence belongs to the distal-less homeobox family. Interacts (via homeobox DNA-binding domain) with POU4F2; this interaction enhances retinal ganglion cell (RGC) differentiation.

Its subcellular location is the nucleus. In terms of biological role, acts as a transcriptional activator. Activates transcription of CGA/alpha-GSU, via binding to the downstream activin regulatory element (DARE) in the gene promoter. Plays a role in terminal differentiation of interneurons, such as amacrine and bipolar cells in the developing retina. Likely to play a regulatory role in the development of the ventral forebrain. May play a role in craniofacial patterning and morphogenesis. The chain is Homeobox protein DLX-2 (DLX2) from Homo sapiens (Human).